A 159-amino-acid polypeptide reads, in one-letter code: Small ribosomal subunit protein uS4 (159 aa).

The 53-residue stretch at 106–158 (RRLQTIVYRMGLAKSIHHARQLIVHGHVAVAGRRVTSPGFLVPRELEDKISLI) folds into the S4 RNA-binding domain.

It belongs to the universal ribosomal protein uS4 family. In terms of assembly, part of the 30S ribosomal subunit. Contacts protein S5. The interaction surface between S4 and S5 is involved in control of translational fidelity.

Functionally, one of the primary rRNA binding proteins, it binds directly to 16S rRNA where it nucleates assembly of the body of the 30S subunit. In terms of biological role, with S5 and S12 plays an important role in translational accuracy. This is Small ribosomal subunit protein uS4 from Pyrobaculum aerophilum (strain ATCC 51768 / DSM 7523 / JCM 9630 / CIP 104966 / NBRC 100827 / IM2).